A 186-amino-acid polypeptide reads, in one-letter code: Probable peptidyl-tRNA hydrolase 2 (186 aa).

The protein belongs to the PTH2 family.

The enzyme catalyses an N-acyl-L-alpha-aminoacyl-tRNA + H2O = an N-acyl-L-amino acid + a tRNA + H(+). Its function is as follows. The natural substrate for this enzyme may be peptidyl-tRNAs which drop off the ribosome during protein synthesis. This Drosophila melanogaster (Fruit fly) protein is Probable peptidyl-tRNA hydrolase 2.